A 182-amino-acid polypeptide reads, in one-letter code: Large ribosomal subunit protein uL5 (182 aa).

It belongs to the universal ribosomal protein uL5 family. In terms of assembly, part of the 50S ribosomal subunit; part of the 5S rRNA/L5/L18/L25 subcomplex. Contacts the 5S rRNA and the P site tRNA. Forms a bridge to the 30S subunit in the 70S ribosome.

In terms of biological role, this is one of the proteins that bind and probably mediate the attachment of the 5S RNA into the large ribosomal subunit, where it forms part of the central protuberance. In the 70S ribosome it contacts protein S13 of the 30S subunit (bridge B1b), connecting the 2 subunits; this bridge is implicated in subunit movement. Contacts the P site tRNA; the 5S rRNA and some of its associated proteins might help stabilize positioning of ribosome-bound tRNAs. In Borrelia hermsii (strain HS1 / DAH), this protein is Large ribosomal subunit protein uL5.